Reading from the N-terminus, the 590-residue chain is NADH-ubiquinone oxidoreductase chain 5 (590 aa).

Transmembrane regions (helical) follow at residues 1–21, 31–51, 77–97, 104–124, 130–150, 167–187, 190–210, 230–250, 261–281, 314–336, 355–375, 398–418, 439–461, 466–486, and 568–588; these read MNLITPTIILTIMLSLMMSIM, LMVLFLISLIPINPLLNNNEL, LLFTPIALFITWSITEFSLWY, INKFIKYLLTFLITMLVIITA, LFIGWEGVGIMSFLLIGWWHG, IGDIGLIMTTAWMMTTSSINM, LMIQHEVVNIIPLLGLVAAAT, TPVSALLHSSTMVVAGVFLLI, IMLTCCLILGATTTMFAAAAA, AFLHMITHSFFKAMLFLCSGSYI, LPMTSSFLTIANLSLMGMPFL, IMITMIATILSACYSTQIMLF, HPLARLMLTSILMGTMTKMSTLQ, VTMPKTIKLMALISTIIGVLL, and MIKNYMAIFTMTTMTVLLFIM.

Belongs to the complex I subunit 5 family.

It localises to the mitochondrion inner membrane. The enzyme catalyses a ubiquinone + NADH + 5 H(+)(in) = a ubiquinol + NAD(+) + 4 H(+)(out). In terms of biological role, core subunit of the mitochondrial membrane respiratory chain NADH dehydrogenase (Complex I) that is believed to belong to the minimal assembly required for catalysis. Complex I functions in the transfer of electrons from NADH to the respiratory chain. The immediate electron acceptor for the enzyme is believed to be ubiquinone. This Lycodon semicarinatus (Ryukyu odd-tooth snake) protein is NADH-ubiquinone oxidoreductase chain 5 (MT-ND5).